Consider the following 448-residue polypeptide: MAIKRPKGTQDHLPDGSPKLSLDTRAAAFTFVRETARRVLERAGAQFTDTPLFEEAELVQRGVGGSTDIVRKEMFTVYYFGDHGGFILRPEGTAGLVRSYLQNGLKQLPAPLKLWTHGPMFRAENVQKGRLRQFHQVDYEVLGSADALVDAEAIALMTEVVRALGVQKVKVKLGSIGDPEDREAYNTYLRELFTPHLEALSDDSKDRLNRNPMRILDSKSESDQTLIAQLGVRPMLDFLGEGARTHFEQVQAYLNAWDVSYEVDPSIVRGLDYYRRTAWELHHEGVGAKSALGGGGRYDGLAQELGSKEVVPGIGWAFGIERLLLAMDAEGVALPETSGPLLYVAAMDDENVTYAATVALTTRRTARAEFAYRAMKPAAAFRDAERRGARFIALIGSDEVAQDTLSIKNLQTGQQSKVQTRDLQAFLAGQADQHSPAIPHDPTPQEKA.

2 disordered regions span residues 1-20 (MAIK…SPKL) and 428-448 (AGQA…QEKA).

This sequence belongs to the class-II aminoacyl-tRNA synthetase family. Homodimer.

Its subcellular location is the cytoplasm. It catalyses the reaction tRNA(His) + L-histidine + ATP = L-histidyl-tRNA(His) + AMP + diphosphate + H(+). The chain is Histidine--tRNA ligase from Deinococcus deserti (strain DSM 17065 / CIP 109153 / LMG 22923 / VCD115).